The following is a 694-amino-acid chain: Elongation factor G 2 (694 aa).

The 275-residue stretch at 8 to 282 (TAIRNIGIMA…AVVSYLPSPL (275 aa)) folds into the tr-type G domain. GTP is bound by residues 17 to 24 (AHIDAGKT), 81 to 85 (DTPGH), and 135 to 138 (NKMD).

The protein belongs to the TRAFAC class translation factor GTPase superfamily. Classic translation factor GTPase family. EF-G/EF-2 subfamily.

It is found in the cytoplasm. Catalyzes the GTP-dependent ribosomal translocation step during translation elongation. During this step, the ribosome changes from the pre-translocational (PRE) to the post-translocational (POST) state as the newly formed A-site-bound peptidyl-tRNA and P-site-bound deacylated tRNA move to the P and E sites, respectively. Catalyzes the coordinated movement of the two tRNA molecules, the mRNA and conformational changes in the ribosome. The sequence is that of Elongation factor G 2 from Syntrophomonas wolfei subsp. wolfei (strain DSM 2245B / Goettingen).